Here is a 562-residue protein sequence, read N- to C-terminus: NAD-dependent malic enzyme 1 (562 aa).

Tyr101 acts as the Proton donor in catalysis. Arg154 is an NAD(+) binding site. Residue Lys172 is the Proton acceptor of the active site. A divalent metal cation-binding residues include Glu243, Asp244, and Asp267. Residues Asp267 and Asn415 each coordinate NAD(+).

It belongs to the malic enzymes family. In terms of assembly, homotetramer. It depends on Mg(2+) as a cofactor. Mn(2+) is required as a cofactor.

It catalyses the reaction (S)-malate + NAD(+) = pyruvate + CO2 + NADH. The enzyme catalyses oxaloacetate + H(+) = pyruvate + CO2. This chain is NAD-dependent malic enzyme 1, found in Vibrio vulnificus (strain YJ016).